The sequence spans 200 residues: Non-specific lipid transfer protein GPI-anchored 16 (200 aa).

An N-terminal signal peptide occupies residues 1–20 (MEGLTLIVVMMSSFMLGGQG). Intrachain disulfides connect Cys27–Cys72, Cys38–Cys56, Cys57–Cys98, and Cys70–Cys107. Residue Asn87 is glycosylated (N-linked (GlcNAc...) asparagine). Positions 134-182 (SPGASKAAGTTPTQAPAPDTPADGPTGPTTKSGIRPVDQPMQPTGLAQS) are disordered. Residues 140–163 (AAGTTPTQAPAPDTPADGPTGPTT) show a composition bias toward low complexity. Thr177 carries GPI-anchor amidated threonine lipidation. A propeptide spans 178-200 (GLAQSSTSPFLPLLFISLILLNL) (removed in mature form).

The protein belongs to the plant LTP family. Expressed in seedlings, preferentially in hypocotyls and roots. Also observed in siliques.

The protein resides in the cell membrane. Its function is as follows. Essential protein involved in female gametophyte development. Probable lipid transfer protein. This Arabidopsis thaliana (Mouse-ear cress) protein is Non-specific lipid transfer protein GPI-anchored 16.